The following is a 127-amino-acid chain: Aspartate 1-decarboxylase (127 aa).

Residue Ser-25 is the Schiff-base intermediate with substrate; via pyruvic acid of the active site. Pyruvic acid (Ser) is present on Ser-25. Residue Thr-57 participates in substrate binding. The active-site Proton donor is the Tyr-58. Position 73–75 (73–75 (GAA)) interacts with substrate.

This sequence belongs to the PanD family. In terms of assembly, heterooctamer of four alpha and four beta subunits. Pyruvate serves as cofactor. In terms of processing, is synthesized initially as an inactive proenzyme, which is activated by self-cleavage at a specific serine bond to produce a beta-subunit with a hydroxyl group at its C-terminus and an alpha-subunit with a pyruvoyl group at its N-terminus.

The protein localises to the cytoplasm. It catalyses the reaction L-aspartate + H(+) = beta-alanine + CO2. It participates in cofactor biosynthesis; (R)-pantothenate biosynthesis; beta-alanine from L-aspartate: step 1/1. Catalyzes the pyruvoyl-dependent decarboxylation of aspartate to produce beta-alanine. The sequence is that of Aspartate 1-decarboxylase from Shouchella clausii (strain KSM-K16) (Alkalihalobacillus clausii).